A 198-amino-acid chain; its full sequence is NAD(P)H dehydrogenase (quinone) (198 aa).

Residues 4 to 189 enclose the Flavodoxin-like domain; sequence ILVLYYSMYG…AIARYQGEHV (186 aa). FMN contacts are provided by residues 10–15 and 78–80; these read SMYGHI and TRF. Tyrosine 12 provides a ligand contact to NAD(+). Tryptophan 98 is a substrate binding site. FMN contacts are provided by residues 113–118 and histidine 133; that span reads STGTGG.

Belongs to the WrbA family. It depends on FMN as a cofactor.

It carries out the reaction a quinone + NADH + H(+) = a quinol + NAD(+). It catalyses the reaction a quinone + NADPH + H(+) = a quinol + NADP(+). This chain is NAD(P)H dehydrogenase (quinone), found in Klebsiella pneumoniae (strain 342).